A 209-amino-acid chain; its full sequence is Uracil phosphoribosyltransferase (209 aa).

Residues Arg79, Arg104, and Asp131–Ser139 each bind 5-phospho-alpha-D-ribose 1-diphosphate. Residues Ile194 and Gly199 to Ala201 contribute to the uracil site. 5-phospho-alpha-D-ribose 1-diphosphate is bound at residue Asp200.

The protein belongs to the UPRTase family. Mg(2+) serves as cofactor.

It carries out the reaction UMP + diphosphate = 5-phospho-alpha-D-ribose 1-diphosphate + uracil. It functions in the pathway pyrimidine metabolism; UMP biosynthesis via salvage pathway; UMP from uracil: step 1/1. With respect to regulation, allosterically activated by GTP. In terms of biological role, catalyzes the conversion of uracil and 5-phospho-alpha-D-ribose 1-diphosphate (PRPP) to UMP and diphosphate. The protein is Uracil phosphoribosyltransferase of Lachnoclostridium phytofermentans (strain ATCC 700394 / DSM 18823 / ISDg) (Clostridium phytofermentans).